Reading from the N-terminus, the 214-residue chain is RNA-free ribonuclease P (214 aa).

This sequence belongs to the HARP family.

It catalyses the reaction Endonucleolytic cleavage of RNA, removing 5'-extranucleotides from tRNA precursor.. In terms of biological role, RNA-free RNase P that catalyzes the removal of the 5'-leader sequence from pre-tRNA to produce the mature 5'-terminus. The polypeptide is RNA-free ribonuclease P (Aeropyrum pernix (strain ATCC 700893 / DSM 11879 / JCM 9820 / NBRC 100138 / K1)).